A 178-amino-acid polypeptide reads, in one-letter code: MARLKSLYNEELKQQIKEELGLANVMQVPKITKITLNMGVGGASQDKKLLEGAVADMTAIAGQKPVVTKARKSVAGFKIREEWPIGCKVTLRGEQMYEFLDRLVAIAIPRIRDFRGFSPKAFDGRGNYSLGIKEQIVFPEVDFDKIDRIRGMDVTITTSAQSDEEGRALLKAFGFPFK.

The protein belongs to the universal ribosomal protein uL5 family. As to quaternary structure, part of the 50S ribosomal subunit; part of the 5S rRNA/L5/L18/L25 subcomplex. Contacts the 5S rRNA and the P site tRNA. Forms a bridge to the 30S subunit in the 70S ribosome.

This is one of the proteins that bind and probably mediate the attachment of the 5S RNA into the large ribosomal subunit, where it forms part of the central protuberance. In the 70S ribosome it contacts protein S13 of the 30S subunit (bridge B1b), connecting the 2 subunits; this bridge is implicated in subunit movement. Contacts the P site tRNA; the 5S rRNA and some of its associated proteins might help stabilize positioning of ribosome-bound tRNAs. In Psychrobacter arcticus (strain DSM 17307 / VKM B-2377 / 273-4), this protein is Large ribosomal subunit protein uL5.